A 78-amino-acid polypeptide reads, in one-letter code: Putative snRNP Sm-like protein (78 aa).

The Sm domain occupies 4 to 76 (RPLDVIHRSL…VLAISPVDVG (73 aa)).

The protein belongs to the snRNP Sm proteins family.

The protein is Putative snRNP Sm-like protein of Thermococcus onnurineus (strain NA1).